The following is a 257-amino-acid chain: YPLALASIVNDGWSLSSLHCQLSGFLMGLSVIGSVFNITGIAINRYCCICHSLRYNKLYSSTNSLCYVFLIWMLTLVAIVPNLCVGTLQYDPRIYSCTFTQSVSSAYTIAVVVFHFIVPMLVVIFCYLRIWALVLQVRWRVKPDNKPKLKPQDFRNFVTMFVVFVLFAICWAPLNFIGLVVASEPASMAPRIPEWLFVASYYMGYFNSCLNAIIYGLLNQNFRQEYRKIIVSLCTTKMFFVDSSNHVAHRIKRKPSP.

Over 5-22 (LASIVNDGWSLSSLHCQL) the chain is Extracellular. The cysteines at positions 20 and 97 are disulfide-linked. The helical transmembrane segment at 23-43 (SGFLMGLSVIGSVFNITGIAI) threads the bilayer. Residues 44–64 (NRYCCICHSLRYNKLYSSTNS) lie on the Cytoplasmic side of the membrane. The helical transmembrane segment at 65-85 (LCYVFLIWMLTLVAIVPNLCV) threads the bilayer. The Extracellular portion of the chain corresponds to 86–107 (GTLQYDPRIYSCTFTQSVSSAY). Residues 108–128 (TIAVVVFHFIVPMLVVIFCYL) traverse the membrane as a helical segment. Residues 129 to 160 (RIWALVLQVRWRVKPDNKPKLKPQDFRNFVTM) are Cytoplasmic-facing. Residues 161–181 (FVVFVLFAICWAPLNFIGLVV) form a helical membrane-spanning segment. At 182-194 (ASEPASMAPRIPE) the chain is on the extracellular side. Residues 195–215 (WLFVASYYMGYFNSCLNAIIY) form a helical membrane-spanning segment. The Cytoplasmic portion of the chain corresponds to 216–257 (GLLNQNFRQEYRKIIVSLCTTKMFFVDSSNHVAHRIKRKPSP).

It belongs to the G-protein coupled receptor 1 family.

Its subcellular location is the cell membrane. High affinity receptor for melatonin. Likely to mediate the reproductive and circadian actions of melatonin. The activity of this receptor is mediated by pertussis toxin sensitive G proteins that inhibit adenylate cyclase activity. Possibly involved in sleep induction, by melatonin activation of the potassium channel KCNMA1/BK and the dissociation of G-beta and G-gamma subunits, thereby decreasing synaptic transmission. This is Melatonin receptor type 1A (MTNR1A) from Bos taurus (Bovine).